The chain runs to 471 residues: BPI fold-containing family B member 1 (471 aa).

A signal peptide spans 1–18 (MTNPWIVSLLLGATLVQA). N-linked (GlcNAc...) asparagine glycosylation is found at Asn-150, Asn-157, Asn-260, and Asn-397. Cys-154 and Cys-197 are joined by a disulfide.

Belongs to the BPI/LBP/Plunc superfamily. Plunc family.

The protein localises to the secreted. Functionally, may play a role in innate immunity in mouth, nose and lungs. Binds bacterial lipopolysaccharide (LPS) and modulates the cellular responses to LPS. This is BPI fold-containing family B member 1 (Bpifb1) from Rattus norvegicus (Rat).